Consider the following 221-residue polypeptide: MVHEAPHASSFQMLLQLLLLLLLRAEPLRSAELTFELPDNAKQCFHEEVEQGVKFSLDYQVITGGHYDVDCYVEDPRGNVIYRETKKQYDSFTYKTEAKGVYRFCFSNEFSTFSHKTVYFDFQVGDEPPILPDMGNRVTALTQMESACVTIHEALKTVIDSQTHYRLREAQDRARAEDLNSRVSYWSVGETIALFVVSFSQVLLLKSFFTEKRPVNRAVHS.

An N-terminal signal peptide occupies residues M1–A25. The Lumenal segment spans residues L28–S184. In terms of domain architecture, GOLD spans K42–V124. R103 carries the dimethylated arginine modification. Residues Y185 to L205 form a helical membrane-spanning segment. The Cytoplasmic portion of the chain corresponds to K206–S221. The COPII vesicle coat-binding signature appears at F208–F209. A COPI vesicle coat-binding motif is present at residues F208–S221.

It belongs to the EMP24/GP25L family. In terms of assembly, monomer in endoplasmic reticulum, endoplasmic reticulum-Golgi intermediate compartment and cis-Golgi network. Interacts (via C-terminus) with COPG1; the interaction involves dimeric TMED3; however, there are conflicting reports on the interaction. Interacts with GORASP1 and GORASP2.

It localises to the endoplasmic reticulum-Golgi intermediate compartment membrane. Its subcellular location is the golgi apparatus. It is found in the cis-Golgi network membrane. The protein localises to the golgi stack membrane. The protein resides in the endoplasmic reticulum membrane. It localises to the cytoplasmic vesicle. Its subcellular location is the COPI-coated vesicle membrane. Its function is as follows. Potential role in vesicular protein trafficking, mainly in the early secretory pathway. Contributes to the coupled localization of TMED2 and TMED10 in the cis-Golgi network. The sequence is that of Transmembrane emp24 domain-containing protein 3 (Tmed3) from Mus musculus (Mouse).